We begin with the raw amino-acid sequence, 393 residues long: MAKESYKRDKPHVNIGTIGHVDHGKTTLTAAITSVLAKSGKAAAREFGDIDKAPEERERGITISTAHVEYQTDKRHYAHIDCPGHADYIKNMITGAAQMDGAILVVAGTDGPMPQTREHILLARQVNVPALVVFLNKVDIADPELLELVEMELRELLTEYGFPGDDIPIIKGSALNALNGDPEGEKAIMELMDAVDDYIPEPVRDVDKPFLMPVEDVFSISGRGTVGTGRIERGIIKVGNEVEIVGIKPTTKSVVTGIEMFQKTLDEGQAGDNAGLLLRGVDKEALERGMVIAKPGSITPHTKFKAEVYILKKEEGGRHTPFFNGYRPQFYFRTTDVTGSVTLPEGVEMVMPGDNLSVDVELIAPIAMEESLRFAIREGGRTVGAGSVTKIVE.

The tr-type G domain occupies 10–203 (KPHVNIGTIG…AVDDYIPEPV (194 aa)). Residues 19-26 (GHVDHGKT) form a G1 region. Residue 19-26 (GHVDHGKT) coordinates GTP. Residue Thr26 participates in Mg(2+) binding. Residues 60–64 (GITIS) are G2. The tract at residues 81-84 (DCPG) is G3. GTP contacts are provided by residues 81 to 85 (DCPGH) and 136 to 139 (NKVD). The tract at residues 136–139 (NKVD) is G4. Positions 173 to 175 (SAL) are G5.

Belongs to the TRAFAC class translation factor GTPase superfamily. Classic translation factor GTPase family. EF-Tu/EF-1A subfamily. As to quaternary structure, monomer.

Its subcellular location is the cytoplasm. It catalyses the reaction GTP + H2O = GDP + phosphate + H(+). In terms of biological role, GTP hydrolase that promotes the GTP-dependent binding of aminoacyl-tRNA to the A-site of ribosomes during protein biosynthesis. The protein is Elongation factor Tu of Chlorobaculum parvum (strain DSM 263 / NCIMB 8327) (Chlorobium vibrioforme subsp. thiosulfatophilum).